The sequence spans 189 residues: Holliday junction branch migration complex subunit RuvA (189 aa).

The domain I stretch occupies residues 1–63 (MIYAMYGVLE…DDEISLYGFS (63 aa)). The tract at residues 64–135 (DVLKLKLFEK…ELKDSMKEFD (72 aa)) is domain II. The segment at 135-139 (DVTLT) is flexible linker. Residues 140–189 (EKDKKILEAIEALVTLGFSRNQSKKAVTQILKKDDSLDDIIKKALKFLSR) are domain III.

The protein belongs to the RuvA family. Homotetramer. Forms an RuvA(8)-RuvB(12)-Holliday junction (HJ) complex. HJ DNA is sandwiched between 2 RuvA tetramers; dsDNA enters through RuvA and exits via RuvB. An RuvB hexamer assembles on each DNA strand where it exits the tetramer. Each RuvB hexamer is contacted by two RuvA subunits (via domain III) on 2 adjacent RuvB subunits; this complex drives branch migration. In the full resolvosome a probable DNA-RuvA(4)-RuvB(12)-RuvC(2) complex forms which resolves the HJ.

Its subcellular location is the cytoplasm. The RuvA-RuvB-RuvC complex processes Holliday junction (HJ) DNA during genetic recombination and DNA repair, while the RuvA-RuvB complex plays an important role in the rescue of blocked DNA replication forks via replication fork reversal (RFR). RuvA specifically binds to HJ cruciform DNA, conferring on it an open structure. The RuvB hexamer acts as an ATP-dependent pump, pulling dsDNA into and through the RuvAB complex. HJ branch migration allows RuvC to scan DNA until it finds its consensus sequence, where it cleaves and resolves the cruciform DNA. This Thermosipho melanesiensis (strain DSM 12029 / CIP 104789 / BI429) protein is Holliday junction branch migration complex subunit RuvA.